The following is a 257-amino-acid chain: MLLAIDSGNTNTVFAVYDGDAKRGEWRAATNANRTADEMGVWLLQLMTLEGLSQGDIDATIIASVVPATVFNLRMLCHRYFHSPPMVVGEPDVDLGIGILLERPDEVGADRLVNAVAAHETYRGPLIVIDFGTATTFDVVDEEGNYCGGAIAPGVNLSLEALHMASAQLPRVAIGRPRTVIGKATIPAMKSGIYLGYVGLIEGLVKRISEEFGAPMRVIATGGLAPLFAEATDAIQTIDDDLTLRGLLIIHRRNQPD.

6 to 13 (DSGNTNTV) is an ATP binding site. 108–111 (GADR) contributes to the substrate binding site. D110 functions as the Proton acceptor in the catalytic mechanism. Position 130 (D130) interacts with K(+). Residue T133 coordinates ATP. Residue T185 coordinates substrate.

It belongs to the type III pantothenate kinase family. As to quaternary structure, homodimer. The cofactor is NH4(+). K(+) serves as cofactor.

The protein localises to the cytoplasm. The catalysed reaction is (R)-pantothenate + ATP = (R)-4'-phosphopantothenate + ADP + H(+). The protein operates within cofactor biosynthesis; coenzyme A biosynthesis; CoA from (R)-pantothenate: step 1/5. Catalyzes the phosphorylation of pantothenate (Pan), the first step in CoA biosynthesis. The sequence is that of Type III pantothenate kinase from Rhodospirillum rubrum (strain ATCC 11170 / ATH 1.1.1 / DSM 467 / LMG 4362 / NCIMB 8255 / S1).